We begin with the raw amino-acid sequence, 226 residues long: Holliday junction branch migration complex subunit RuvA (226 aa).

A domain I region spans residues 1 to 67 (MITSVYAKIE…AINKELYAFK (67 aa)). The domain II stretch occupies residues 68-145 (SLKEKEWFKA…YLKNQIVVSD (78 aa)). The flexible linker stretch occupies residues 146 to 167 (KVEPQIDDDEKIDDSKDLNDDE). Residues 168–226 (LLSEIVIEAIDCLISLGYKQEQIKTALAEIDLKNESINDSADLVAVIIKQIGLRTSEVS) are domain III.

It belongs to the RuvA family. As to quaternary structure, homotetramer. Forms an RuvA(8)-RuvB(12)-Holliday junction (HJ) complex. HJ DNA is sandwiched between 2 RuvA tetramers; dsDNA enters through RuvA and exits via RuvB. An RuvB hexamer assembles on each DNA strand where it exits the tetramer. Each RuvB hexamer is contacted by two RuvA subunits (via domain III) on 2 adjacent RuvB subunits; this complex drives branch migration. In the full resolvosome a probable DNA-RuvA(4)-RuvB(12)-RuvC(2) complex forms which resolves the HJ.

It localises to the cytoplasm. Its function is as follows. The RuvA-RuvB-RuvC complex processes Holliday junction (HJ) DNA during genetic recombination and DNA repair, while the RuvA-RuvB complex plays an important role in the rescue of blocked DNA replication forks via replication fork reversal (RFR). RuvA specifically binds to HJ cruciform DNA, conferring on it an open structure. The RuvB hexamer acts as an ATP-dependent pump, pulling dsDNA into and through the RuvAB complex. HJ branch migration allows RuvC to scan DNA until it finds its consensus sequence, where it cleaves and resolves the cruciform DNA. The chain is Holliday junction branch migration complex subunit RuvA from Mycoplasmoides gallisepticum (strain R(low / passage 15 / clone 2)) (Mycoplasma gallisepticum).